A 192-amino-acid polypeptide reads, in one-letter code: Ubiquitin-conjugating enzyme E2 T (192 aa).

The region spanning 2–152 is the UBC core domain; sequence QRVSRLKREL…AKKWTEKHAL (151 aa). C86 (glycyl thioester intermediate) is an active-site residue. The disordered stretch occupies residues 150-192; it reads HALPAPQGSDKESQEKSGSSEGTSHKRKSAEIAEESKKPCREP. Basic and acidic residues predominate over residues 178 to 192; that stretch reads SAEIAEESKKPCREP.

The protein belongs to the ubiquitin-conjugating enzyme family.

It is found in the nucleus. The catalysed reaction is S-ubiquitinyl-[E1 ubiquitin-activating enzyme]-L-cysteine + [E2 ubiquitin-conjugating enzyme]-L-cysteine = [E1 ubiquitin-activating enzyme]-L-cysteine + S-ubiquitinyl-[E2 ubiquitin-conjugating enzyme]-L-cysteine.. It participates in protein modification; protein ubiquitination. Functionally, accepts ubiquitin from the E1 complex and catalyzes its covalent attachment to other proteins. Catalyzes monoubiquitination. Involved in DNA repair. The chain is Ubiquitin-conjugating enzyme E2 T (ube2t) from Xenopus laevis (African clawed frog).